Here is a 305-residue protein sequence, read N- to C-terminus: Tyrosine recombinase XerC (305 aa).

Residues 4-95 (ISIQELIKQW…TVKNFYKFLE (92 aa)) form the Core-binding (CB) domain. In terms of domain architecture, Tyr recombinase spans 116-298 (LLPKALSVDD…SIKHLEAVYN (183 aa)). Catalysis depends on residues R159, K182, H250, R253, and H276. The active-site O-(3'-phospho-DNA)-tyrosine intermediate is Y285.

Belongs to the 'phage' integrase family. XerC subfamily. Forms a cyclic heterotetrameric complex composed of two molecules of XerC and two molecules of XerD.

Its subcellular location is the cytoplasm. In terms of biological role, site-specific tyrosine recombinase, which acts by catalyzing the cutting and rejoining of the recombining DNA molecules. The XerC-XerD complex is essential to convert dimers of the bacterial chromosome into monomers to permit their segregation at cell division. It also contributes to the segregational stability of plasmids. This chain is Tyrosine recombinase XerC, found in Rickettsia typhi (strain ATCC VR-144 / Wilmington).